The primary structure comprises 275 residues: Nuclear egress protein 2 (275 aa).

Residues 1–251 (MDSYNYRDFA…SERVKRRPVR (251 aa)) are Perinuclear space-facing. A disordered region spans residues 197-221 (CDRSNGIVSPREHRECRERQKRRPT). Residues 252 to 272 (IAAAILAFVFVAVILAIATKG) form a helical membrane-spanning segment. Residues 273–275 (RLF) are Nuclear-facing.

The protein belongs to the herpesviridae NEC2 protein family. As to quaternary structure, forms a heterohexameric complex with NEC1. Phosphorylated.

Its subcellular location is the host nucleus inner membrane. Functionally, plays an essential role in virion nuclear egress, the first step of virion release from infected cell. Within the host nucleus, NEC1 interacts with the newly formed capsid through the vertexes and directs it to the inner nuclear membrane by associating with NEC2. Induces the budding of the capsid at the inner nuclear membrane as well as its envelopment into the perinuclear space. There, the NEC1/NEC2 complex promotes the fusion of the enveloped capsid with the outer nuclear membrane and the subsequent release of the viral capsid into the cytoplasm where it will reach the secondary budding sites in the host Golgi or trans-Golgi network. In Equus caballus (Horse), this protein is Nuclear egress protein 2.